The primary structure comprises 376 residues: NifS-like protein (376 aa).

Pyridoxal 5'-phosphate contacts are provided by residues 58 to 59 (SE) and 184 to 186 (SLN).

This sequence belongs to the class-V pyridoxal-phosphate-dependent aminotransferase family. NifS/IscS subfamily. Pyridoxal 5'-phosphate serves as cofactor.

The protein localises to the virion. The sequence is that of NifS-like protein from African swine fever virus (isolate Tick/Malawi/Lil 20-1/1983) (ASFV).